The chain runs to 861 residues: DNA mismatch repair protein MutS (861 aa).

613 to 620 (GPNMGGKS) lines the ATP pocket.

Belongs to the DNA mismatch repair MutS family.

Its function is as follows. This protein is involved in the repair of mismatches in DNA. It is possible that it carries out the mismatch recognition step. This protein has a weak ATPase activity. This Dichelobacter nodosus (strain VCS1703A) protein is DNA mismatch repair protein MutS.